Consider the following 171-residue polypeptide: Prolyl-tRNA synthetase associated domain-containing protein 1 (171 aa).

It belongs to the PRORSD1 family.

This chain is Prolyl-tRNA synthetase associated domain-containing protein 1 (PRORSD1), found in Bos taurus (Bovine).